The chain runs to 531 residues: Putative aldehyde dehydrogenase family 7 member A1 homolog (531 aa).

Residue 264 to 269 (GSSEIG) coordinates NAD(+). Glutamate 286 (proton acceptor) is an active-site residue. Cysteine 320 functions as the Nucleophile in the catalytic mechanism.

Belongs to the aldehyde dehydrogenase family. Homotetramer.

The catalysed reaction is an aldehyde + NAD(+) + H2O = a carboxylate + NADH + 2 H(+). This chain is Putative aldehyde dehydrogenase family 7 member A1 homolog (alh-9), found in Caenorhabditis elegans.